Here is a 268-residue protein sequence, read N- to C-terminus: Exodeoxyribonuclease III (268 aa).

Glutamate 34 contributes to the Mg(2+) binding site. The active site involves tyrosine 109. Residues aspartate 151, asparagine 153, and aspartate 258 each contribute to the Mg(2+) site. The active-site Proton donor/acceptor is the aspartate 151.

Belongs to the DNA repair enzymes AP/ExoA family. Monomer. Mg(2+) serves as cofactor. The cofactor is Mn(2+).

The catalysed reaction is Exonucleolytic cleavage in the 3'- to 5'-direction to yield nucleoside 5'-phosphates.. Its function is as follows. Major apurinic-apyrimidinic endonuclease of E.coli. It removes the damaged DNA at cytosines and guanines by cleaving on the 3'-side of the AP site by a beta-elimination reaction. It exhibits 3'-5'-exonuclease, 3'-phosphomonoesterase, 3'-repair diesterase and ribonuclease H activities. This is Exodeoxyribonuclease III (xthA) from Salmonella typhi.